Reading from the N-terminus, the 362-residue chain is Type-2 angiotensin II receptor (362 aa).

The Extracellular segment spans residues 1–44; that stretch reads MKANFSLATISKNITSSLHVGFVNISSNESTFNCSHKPSDKHLD. N-linked (GlcNAc...) asparagine glycans are attached at residues asparagine 4, asparagine 13, asparagine 24, asparagine 28, and asparagine 33. 2 disulfide bridges follow: cysteine 34-cysteine 289 and cysteine 116-cysteine 194. The chain crosses the membrane as a helical span at residues 45-69; that stretch reads AIPVLYYIIFGVGFLVNTIVVTLFC. Topologically, residues 70 to 79 are cytoplasmic; sequence CQKGPKKVSS. Residues 80-103 traverse the membrane as a helical segment; the sequence is IYIFNLAVADLLLLATLPLWATYY. 2 residues coordinate angiotensin II: tyrosine 102 and tyrosine 103. Residues 104-113 lie on the Extracellular side of the membrane; the sequence is SHRYDWIFGP. A helical membrane pass occupies residues 114 to 139; sequence VMCKVFGSFLTLNMFASIFFITCMSV. Over 140–158 the chain is Cytoplasmic; it reads DRYQSVIYPFLSQRRNPWQ. The helical transmembrane segment at 159–180 threads the bilayer; that stretch reads ASYIVPLVWCMACLSSLPTFYF. Angiotensin II-binding residues include arginine 181, tyrosine 203, and lysine 214. Topologically, residues 181–205 are extracellular; that stretch reads RDVRTIEYLGVNACIMAFPPEKYAQ. A helical transmembrane segment spans residues 206–231; sequence WSAGIALMKNILGFIIPLIFIATCYF. The Cytoplasmic segment spans residues 232 to 256; that stretch reads GIRKHLLKTNSYGKNRITRDQVLKM. The helical transmembrane segment at 257–280 threads the bilayer; that stretch reads AAAVVLAFIICWLPFHVLTFLDAL. Residue aspartate 278 coordinates angiotensin II. Residues 281-293 are Extracellular-facing; the sequence is AWMGVINSCEVIA. The chain crosses the membrane as a helical span at residues 294 to 319; that stretch reads VIDLALPFAILLGFTNSCINPFLYCF. Aspartate 296 contacts angiotensin II. Residues 320–362 are Cytoplasmic-facing; sequence VGNRFQQKLRRVFRVPITWLQGKRENGSCGKSSSFREMETFVS. The segment at 323–332 is helix VIII; sequence RFQQKLRRVF.

The protein belongs to the G-protein coupled receptor 1 family. Interacts with MTUS1.

It localises to the cell membrane. Functionally, receptor for angiotensin II, a vasoconstricting peptide. Signals primarily via a non-canonical G-protein- and beta-arrestin independent pathways. Cooperates with MTUS1 to inhibit ERK2 activation and cell proliferation. The sequence is that of Type-2 angiotensin II receptor (AGTR2) from Ovis aries (Sheep).